A 113-amino-acid polypeptide reads, in one-letter code: Prefoldin subunit beta (113 aa).

It belongs to the prefoldin subunit beta family. As to quaternary structure, heterohexamer of two alpha and four beta subunits.

The protein localises to the cytoplasm. In terms of biological role, molecular chaperone capable of stabilizing a range of proteins. Seems to fulfill an ATP-independent, HSP70-like function in archaeal de novo protein folding. The sequence is that of Prefoldin subunit beta from Methanococcus vannielii (strain ATCC 35089 / DSM 1224 / JCM 13029 / OCM 148 / SB).